Consider the following 604-residue polypeptide: Putative JmjC domain-containing protein L887 (604 aa).

In terms of domain architecture, JmjC spans 1–127 (MNNMKKIIII…PNNKLNLIQP (127 aa)). A helical membrane pass occupies residues 4–24 (MKKIIIISIIIIIIIVLLFYI).

The protein resides in the membrane. This is Putative JmjC domain-containing protein L887 from Acanthamoeba polyphaga (Amoeba).